The following is a 448-amino-acid chain: MGRMFGTDGVRGIANKELTAELAYRLGRAGAYVLTNETHKPKILVGMDTRISGDMLEAALVSGILSVGAEAVCVGIVPTPAVAYLTRKYKADAGVVISASHNPVEYNGIKFFDAKGYKLSDNLEDEIQKIIESDFEGVPLPTGESVGRKVVEESAEEDYIKFAKSTIGTDLKGMKIALDCANGAAYKTAVKTFRELGAQVTVINNDPDGININCNCGSTHPEELMDYVVKKNCDLGLAFDGDADRCLAVDEKGNLIDGDFIMAICGKYLKDKGELHKDVVVVTVMSNMGLFLALDKANIKTVKTKVGDRYVLEEMLKEGYKLGGEQSGHIIFLDYNTTGDGLVTALKICSIVKESRKTLSKLASIMHKLPQVLANAKVPNNKKDIYLEDKEISDEIKKIEEELHGKGRVLIRPSGTEPLVRVMLEGEDQDRLNTLAHGLAELIEKKAN.

Serine 100 (phosphoserine intermediate) is an active-site residue. Serine 100, aspartate 240, aspartate 242, and aspartate 244 together coordinate Mg(2+). Phosphoserine is present on serine 100.

Belongs to the phosphohexose mutase family. It depends on Mg(2+) as a cofactor. Activated by phosphorylation.

It carries out the reaction alpha-D-glucosamine 1-phosphate = D-glucosamine 6-phosphate. Its function is as follows. Catalyzes the conversion of glucosamine-6-phosphate to glucosamine-1-phosphate. The polypeptide is Phosphoglucosamine mutase (Clostridium acetobutylicum (strain ATCC 824 / DSM 792 / JCM 1419 / IAM 19013 / LMG 5710 / NBRC 13948 / NRRL B-527 / VKM B-1787 / 2291 / W)).